The sequence spans 294 residues: Nucleotide-binding protein Swol_0262 (294 aa).

15 to 22 lines the ATP pocket; sequence GLSGAGKT. 65 to 68 is a binding site for GTP; sequence DVRG.

Belongs to the RapZ-like family.

Functionally, displays ATPase and GTPase activities. The chain is Nucleotide-binding protein Swol_0262 from Syntrophomonas wolfei subsp. wolfei (strain DSM 2245B / Goettingen).